We begin with the raw amino-acid sequence, 140 residues long: Lymphocyte antigen 6H (140 aa).

An N-terminal signal peptide occupies residues 1-25; sequence MLPAAMKGLGLALLAVLLCSAPAHG. Positions 26 to 91 constitute a UPAR/Ly6 domain; that stretch reads LWCQDCTLTT…RHFFSDYLMG (66 aa). Cystine bridges form between Cys-28/Cys-52, Cys-31/Cys-40, Cys-45/Cys-73, Cys-77/Cys-104, and Cys-105/Cys-110. N-linked (GlcNAc...) asparagine glycosylation is present at Asn-36. The GPI-anchor amidated glycine moiety is linked to residue Gly-115. A propeptide spans 116–140 (removed in mature form); it reads AGHSPWALAGGLLLSLGPALLWAGP.

In terms of assembly, interacts with CHRNA4 and CHRNA7. Highly expressed in brain (cerebral cortex, amygdala, hippocampus and subthalamic nucleus) and in acute human leukemic cell line MOLT-3. Also found in lower levels in testis, pancreas, small intestine and colon.

It is found in the cell membrane. Its function is as follows. Believed to act as a modulator of nicotinic acetylcholine receptors (nAChRs) activity. In vitro inhibits alpha-3:beta-4-containing nAChRs maximum response. May play a role in the intracellular trafficking of alpha-7-containing nAChRs and may inhibit their expression at the cell surface. Seems to inhibit alpha-7/CHRNA7 signaling in hippocampal neurons. In Homo sapiens (Human), this protein is Lymphocyte antigen 6H (LY6H).